We begin with the raw amino-acid sequence, 245 residues long: Biosynthetic peptidoglycan transglycosylase (245 aa).

A helical transmembrane segment spans residues 20 to 42 (VYAGSVFAGAWLATQLFYLAQIA).

It belongs to the glycosyltransferase 51 family.

The protein localises to the cell inner membrane. The catalysed reaction is [GlcNAc-(1-&gt;4)-Mur2Ac(oyl-L-Ala-gamma-D-Glu-L-Lys-D-Ala-D-Ala)](n)-di-trans,octa-cis-undecaprenyl diphosphate + beta-D-GlcNAc-(1-&gt;4)-Mur2Ac(oyl-L-Ala-gamma-D-Glu-L-Lys-D-Ala-D-Ala)-di-trans,octa-cis-undecaprenyl diphosphate = [GlcNAc-(1-&gt;4)-Mur2Ac(oyl-L-Ala-gamma-D-Glu-L-Lys-D-Ala-D-Ala)](n+1)-di-trans,octa-cis-undecaprenyl diphosphate + di-trans,octa-cis-undecaprenyl diphosphate + H(+). It participates in cell wall biogenesis; peptidoglycan biosynthesis. Its function is as follows. Peptidoglycan polymerase that catalyzes glycan chain elongation from lipid-linked precursors. This chain is Biosynthetic peptidoglycan transglycosylase, found in Burkholderia lata (strain ATCC 17760 / DSM 23089 / LMG 22485 / NCIMB 9086 / R18194 / 383).